The primary structure comprises 257 residues: Gamma-secretase subunit APH-1B (257 aa).

7 helical membrane passes run valine 5–isoleucine 25, isoleucine 32–valine 52, leucine 71–tyrosine 91, leucine 115–asparagine 135, tyrosine 158–phenylalanine 178, tryptophan 186–serine 206, and leucine 213–glycine 233.

Belongs to the APH-1 family. Probable component of the gamma-secretase complex, a complex composed of a presenilin homodimer (PSEN1 or PSEN2), nicastrin (NCSTN), APH1 (APH1A or APH1B) and PEN2. Such minimal complex is sufficient for secretase activity, although other components may exist. Interacts with PSEN1 and PSEN2. In terms of tissue distribution, weakly or not expressed in leukocytes, lung, placenta, small intestine, liver, kidney, spleen thymus, colon, skeletal muscle, heart and brain.

The protein resides in the membrane. Functionally, probable subunit of the gamma-secretase complex, an endoprotease complex that catalyzes the intramembrane cleavage of integral proteins such as Notch receptors and APP (amyloid-beta precursor protein). It probably represents a stabilizing cofactor for the presenilin homodimer that promotes the formation of a stable complex. Probably present in a minority of gamma-secretase complexes compared to APH1A. In Homo sapiens (Human), this protein is Gamma-secretase subunit APH-1B (APH1B).